The following is a 196-amino-acid chain: Ribosome maturation factor RimP (196 aa).

Residues glutamate 176–glutamine 196 are disordered. Residues threonine 177–glutamine 196 show a composition bias toward acidic residues.

Belongs to the RimP family.

The protein resides in the cytoplasm. Functionally, required for maturation of 30S ribosomal subunits. The sequence is that of Ribosome maturation factor RimP from Roseobacter denitrificans (strain ATCC 33942 / OCh 114) (Erythrobacter sp. (strain OCh 114)).